Consider the following 204-residue polypeptide: Large ribosomal subunit protein eL15B (204 aa).

The interval 165–185 (TATGKKSRGINKGHKFNNTKA) is disordered. Residues 169 to 185 (KKSRGINKGHKFNNTKA) show a composition bias toward basic residues.

The protein belongs to the eukaryotic ribosomal protein eL15 family. In terms of assembly, component of the large ribosomal subunit (LSU). Mature yeast ribosomes consist of a small (40S) and a large (60S) subunit. The 40S small subunit contains 1 molecule of ribosomal RNA (18S rRNA) and 33 different proteins (encoded by 57 genes). The large 60S subunit contains 3 rRNA molecules (25S, 5.8S and 5S rRNA) and 46 different proteins (encoded by 81 genes).

The protein resides in the cytoplasm. In terms of biological role, component of the ribosome, a large ribonucleoprotein complex responsible for the synthesis of proteins in the cell. The small ribosomal subunit (SSU) binds messenger RNAs (mRNAs) and translates the encoded message by selecting cognate aminoacyl-transfer RNA (tRNA) molecules. The large subunit (LSU) contains the ribosomal catalytic site termed the peptidyl transferase center (PTC), which catalyzes the formation of peptide bonds, thereby polymerizing the amino acids delivered by tRNAs into a polypeptide chain. The nascent polypeptides leave the ribosome through a tunnel in the LSU and interact with protein factors that function in enzymatic processing, targeting, and the membrane insertion of nascent chains at the exit of the ribosomal tunnel. The chain is Large ribosomal subunit protein eL15B from Saccharomyces cerevisiae (strain ATCC 204508 / S288c) (Baker's yeast).